The sequence spans 505 residues: Flagellin (505 aa).

This sequence belongs to the bacterial flagellin family.

The protein resides in the secreted. The protein localises to the bacterial flagellum. Its function is as follows. Flagellin is the subunit protein which polymerizes to form the filaments of bacterial flagella. The chain is Flagellin (fliC) from Salmonella montevideo.